The primary structure comprises 208 residues: Uracil phosphoribosyltransferase (208 aa).

Residues R78, R103, and 130 to 138 each bind 5-phospho-alpha-D-ribose 1-diphosphate; that span reads DPMLATGGT. Uracil-binding positions include I193 and 198–200; that span reads GDA. Residue D199 coordinates 5-phospho-alpha-D-ribose 1-diphosphate.

Belongs to the UPRTase family. It depends on Mg(2+) as a cofactor.

The enzyme catalyses UMP + diphosphate = 5-phospho-alpha-D-ribose 1-diphosphate + uracil. Its pathway is pyrimidine metabolism; UMP biosynthesis via salvage pathway; UMP from uracil: step 1/1. Its activity is regulated as follows. Allosterically activated by GTP. Functionally, catalyzes the conversion of uracil and 5-phospho-alpha-D-ribose 1-diphosphate (PRPP) to UMP and diphosphate. This chain is Uracil phosphoribosyltransferase, found in Nitratidesulfovibrio vulgaris (strain ATCC 29579 / DSM 644 / CCUG 34227 / NCIMB 8303 / VKM B-1760 / Hildenborough) (Desulfovibrio vulgaris).